The chain runs to 614 residues: Glucose oxidase 1 (614 aa).

An N-terminal signal peptide occupies residues 1 to 15; it reads MKSIILSCFVISAAA. The FAD site is built by Leu-52, Thr-53, and Glu-73. Asn-112 is a glycosylation site (N-linked (GlcNAc...) asparagine). Positions 117-136 are disordered; the sequence is IRSGNGLGGSTLTNGGSWTR. Ser-126, Asn-130, Gly-131, and Ser-133 together coordinate FAD. N-linked (GlcNAc...) asparagine glycans are attached at residues Asn-184 and Asn-191. The cysteines at positions 187 and 229 are disulfide-linked. Residue Val-273 participates in FAD binding. N-linked (GlcNAc...) asparagine glycosylation is found at Asn-279, Asn-383, and Asn-416. His-544 functions as the Proton acceptor in the catalytic mechanism. Residues Arg-565 and Val-566 each coordinate O2. FAD contacts are provided by Gly-577 and Met-589.

This sequence belongs to the GMC oxidoreductase family. As to quaternary structure, homodimer. FAD serves as cofactor.

It is found in the secreted. The protein localises to the cell wall. The protein resides in the cytoplasm. It localises to the extracellular space. Its subcellular location is the extracellular matrix. It carries out the reaction beta-D-glucose + O2 = D-glucono-1,5-lactone + H2O2. Functionally, glucose oxidase catalyzes the oxidation of beta-D-glucose to D-glucono-delta-lactone and hydrogen peroxide in the presence of molecular oxygen. This Penicillium expansum (Blue mold rot fungus) protein is Glucose oxidase 1.